A 158-amino-acid chain; its full sequence is 2-C-methyl-D-erythritol 2,4-cyclodiphosphate synthase (158 aa).

A divalent metal cation-binding residues include aspartate 9 and histidine 11. 4-CDP-2-C-methyl-D-erythritol 2-phosphate contacts are provided by residues 9–11 (DVH) and 35–36 (HS). Histidine 43 contacts a divalent metal cation. 4-CDP-2-C-methyl-D-erythritol 2-phosphate-binding positions include 57 to 59 (DIG), 62 to 66 (FPDTD), 133 to 136 (TTTE), phenylalanine 140, and arginine 143.

It belongs to the IspF family. Homotrimer. Requires a divalent metal cation as cofactor.

It catalyses the reaction 4-CDP-2-C-methyl-D-erythritol 2-phosphate = 2-C-methyl-D-erythritol 2,4-cyclic diphosphate + CMP. The protein operates within isoprenoid biosynthesis; isopentenyl diphosphate biosynthesis via DXP pathway; isopentenyl diphosphate from 1-deoxy-D-xylulose 5-phosphate: step 4/6. Functionally, involved in the biosynthesis of isopentenyl diphosphate (IPP) and dimethylallyl diphosphate (DMAPP), two major building blocks of isoprenoid compounds. Catalyzes the conversion of 4-diphosphocytidyl-2-C-methyl-D-erythritol 2-phosphate (CDP-ME2P) to 2-C-methyl-D-erythritol 2,4-cyclodiphosphate (ME-CPP) with a corresponding release of cytidine 5-monophosphate (CMP). This is 2-C-methyl-D-erythritol 2,4-cyclodiphosphate synthase from Haemophilus influenzae (strain PittGG).